Reading from the N-terminus, the 202-residue chain is Small ribosomal subunit protein uS4c (202 aa).

Residues Met90–Leu153 enclose the S4 RNA-binding domain.

Belongs to the universal ribosomal protein uS4 family. As to quaternary structure, part of the 30S ribosomal subunit. Contacts protein S5. The interaction surface between S4 and S5 is involved in control of translational fidelity.

It localises to the plastid. Its subcellular location is the chloroplast. Its function is as follows. One of the primary rRNA binding proteins, it binds directly to 16S rRNA where it nucleates assembly of the body of the 30S subunit. In terms of biological role, with S5 and S12 plays an important role in translational accuracy. The polypeptide is Small ribosomal subunit protein uS4c (rps4) (Rosulabryum capillare (Capillary thread-moss)).